The following is a 220-amino-acid chain: Cell division protein SepF (220 aa).

The interval 33–82 (GAARGYARRPREDRFEEEGYIDRAGREYDDRPAPREYDEPPIYRGGYDEP) is disordered. A compositionally biased stretch (basic and acidic residues) spans 52-70 (YIDRAGREYDDRPAPREYD).

Belongs to the SepF family. As to quaternary structure, homodimer. Interacts with FtsZ.

It localises to the cytoplasm. Functionally, cell division protein that is part of the divisome complex and is recruited early to the Z-ring. Probably stimulates Z-ring formation, perhaps through the cross-linking of FtsZ protofilaments. Its function overlaps with FtsA. This chain is Cell division protein SepF, found in Mycobacterium sp. (strain JLS).